The sequence spans 407 residues: Arginine deiminase (407 aa).

Cys-397 acts as the Amidino-cysteine intermediate in catalysis.

The protein belongs to the arginine deiminase family.

It is found in the cytoplasm. The catalysed reaction is L-arginine + H2O = L-citrulline + NH4(+). It participates in amino-acid degradation; L-arginine degradation via ADI pathway; carbamoyl phosphate from L-arginine: step 1/2. The protein is Arginine deiminase of Vibrio parahaemolyticus serotype O3:K6 (strain RIMD 2210633).